A 180-amino-acid chain; its full sequence is Nucleoside triphosphate/diphosphate phosphatase (180 aa).

Arginine 26 acts as the Proton donor in catalysis. Positions 90, 106, 108, 110, 123, and 126 each coordinate Mg(2+).

This sequence belongs to the Ntdp family. It depends on Mg(2+) as a cofactor.

It catalyses the reaction a ribonucleoside 5'-triphosphate + H2O = a ribonucleoside 5'-diphosphate + phosphate + H(+). The catalysed reaction is a ribonucleoside 5'-diphosphate + H2O = a ribonucleoside 5'-phosphate + phosphate + H(+). Functionally, has nucleoside phosphatase activity towards nucleoside triphosphates and nucleoside diphosphates. This is Nucleoside triphosphate/diphosphate phosphatase from Staphylococcus saprophyticus subsp. saprophyticus (strain ATCC 15305 / DSM 20229 / NCIMB 8711 / NCTC 7292 / S-41).